We begin with the raw amino-acid sequence, 237 residues long: Eukaryotic translation initiation factor 3 subunit J (237 aa).

The interval 20-64 is disordered; that stretch reads ANNINKWEGEDDDEDVKESWEDEEEKKDEEKPTKTEAPAKTKPNK. Over residues 28 to 46 the composition is skewed to acidic residues; sequence GEDDDEDVKESWEDEEEKK. The span at 47-58 shows a compositional bias: basic and acidic residues; it reads DEEKPTKTEAPA. The stretch at 63-115 forms a coiled coil; that stretch reads NKVLKAKLLEQECLEKEEEAKRLANMSTEEKLAEKLRLQKIQEESDLKSALET.

It belongs to the eIF-3 subunit J family. Component of the eukaryotic translation initiation factor 3 (eIF-3) complex. The eIF-3 complex interacts with pix.

It is found in the cytoplasm. Functionally, component of the eukaryotic translation initiation factor 3 (eIF-3) complex, which is involved in protein synthesis of a specialized repertoire of mRNAs and, together with other initiation factors, stimulates binding of mRNA and methionyl-tRNAi to the 40S ribosome. The eIF-3 complex specifically targets and initiates translation of a subset of mRNAs involved in cell proliferation. This is Eukaryotic translation initiation factor 3 subunit J from Drosophila grimshawi (Hawaiian fruit fly).